The sequence spans 241 residues: Megakaryocyte and platelet inhibitory receptor G6b (241 aa).

The signal sequence occupies residues 1–17 (MAVFLQLLPLLLSRAQG). The Extracellular segment spans residues 18 to 142 (NPGASLDGRP…GPTHGSVYPQ (125 aa)). Asparagine 32 carries an N-linked (GlcNAc...) asparagine glycan. A helical transmembrane segment spans residues 143 to 163 (LLIPLLGAGLVLGLGALGLVW). Residues 164 to 241 (WLHRRLPPQP…DASTIYAVVV (78 aa)) are Cytoplasmic-facing. Short sequence motifs (ITIM motif) lie at residues 209–214 (LLYADL) and 235–240 (TIYAVV). Residue tyrosine 211 is modified to Phosphotyrosine.

As to quaternary structure, interacts (via ITIM motif) with PTPN6 and PTPN11. Binds to heparin. Post-translationally, all isoforms are N-glycosylated. In terms of processing, isoform E is O-glycosylated. Phosphorylated. In terms of tissue distribution, expressed in platelets. Expressed in a restricted set of hematopoietic cell lines including the erythroleukemia cell line K-562 and the T-cell leukemia cell lines MOLT-4 and Jurkat. Not detected in the monocyte-like cell line U-937, the B-cell-like cell line Raji, the fibroblast cell lines TK and HeLa, or the natural killer cell lines NKL, NK 62 and YT.

Its subcellular location is the endoplasmic reticulum. It is found in the golgi apparatus. The protein resides in the cell membrane. Inhibitory receptor that acts as a critical regulator of hematopoietic lineage differentiation, megakaryocyte function and platelet production. Inhibits platelet aggregation and activation by agonists such as ADP and collagen-related peptide. This regulation of megakaryocate function as well as platelet production ann activation is done through the inhibition (via the 2 ITIM motifs) of the receptors CLEC1B and GP6:FcRgamma signaling. Appears to operate in a calcium-independent manner. Functionally, isoform B, displayed in this entry, is the only isoform to contain both a transmembrane region and 2 immunoreceptor tyrosine-based inhibitor motifs (ITIMs) and, thus, the only one which probably has a role of inhibitory receptor. Isoform A may be the activating counterpart of isoform B. This Homo sapiens (Human) protein is Megakaryocyte and platelet inhibitory receptor G6b.